Consider the following 677-residue polypeptide: UvrABC system protein B (677 aa).

Residues 24 to 412 (EGVLEGVPAQ…EGIVVEQVIR (389 aa)) form the Helicase ATP-binding domain. 37–44 (GVTGSGKT) provides a ligand contact to ATP. The Beta-hairpin signature appears at 90–113 (YYDYYQPEAYLPSSDTYIEKDLAI). The Helicase C-terminal domain maps to 429 to 591 (QIDDLMEEIQ…ITPQQIKKAR (163 aa)). The UVR domain occupies 635–670 (EKSMERTRKLMQEAAKKLEFIEAAQYRDELLKMEDL).

The protein belongs to the UvrB family. Forms a heterotetramer with UvrA during the search for lesions. Interacts with UvrC in an incision complex.

The protein resides in the cytoplasm. The UvrABC repair system catalyzes the recognition and processing of DNA lesions. A damage recognition complex composed of 2 UvrA and 2 UvrB subunits scans DNA for abnormalities. Upon binding of the UvrA(2)B(2) complex to a putative damaged site, the DNA wraps around one UvrB monomer. DNA wrap is dependent on ATP binding by UvrB and probably causes local melting of the DNA helix, facilitating insertion of UvrB beta-hairpin between the DNA strands. Then UvrB probes one DNA strand for the presence of a lesion. If a lesion is found the UvrA subunits dissociate and the UvrB-DNA preincision complex is formed. This complex is subsequently bound by UvrC and the second UvrB is released. If no lesion is found, the DNA wraps around the other UvrB subunit that will check the other stand for damage. The sequence is that of UvrABC system protein B from Bacteroides fragilis (strain ATCC 25285 / DSM 2151 / CCUG 4856 / JCM 11019 / LMG 10263 / NCTC 9343 / Onslow / VPI 2553 / EN-2).